A 591-amino-acid chain; its full sequence is Aspartate--tRNA(Asp/Asn) ligase (591 aa).

Glutamate 174 is a binding site for L-aspartate. The segment at 198 to 201 (QLFK) is aspartate. Arginine 220 is a binding site for L-aspartate. Residues 220–222 (RDE) and glutamine 229 contribute to the ATP site. Histidine 450 serves as a coordination point for L-aspartate. Position 483 (glutamate 483) interacts with ATP. Arginine 490 contacts L-aspartate. 535–538 (GLDR) is a binding site for ATP.

It belongs to the class-II aminoacyl-tRNA synthetase family. Type 1 subfamily. In terms of assembly, homodimer.

The protein localises to the cytoplasm. The enzyme catalyses tRNA(Asx) + L-aspartate + ATP = L-aspartyl-tRNA(Asx) + AMP + diphosphate. Its function is as follows. Aspartyl-tRNA synthetase with relaxed tRNA specificity since it is able to aspartylate not only its cognate tRNA(Asp) but also tRNA(Asn). Reaction proceeds in two steps: L-aspartate is first activated by ATP to form Asp-AMP and then transferred to the acceptor end of tRNA(Asp/Asn). The protein is Aspartate--tRNA(Asp/Asn) ligase of Azotobacter vinelandii (strain DJ / ATCC BAA-1303).